A 356-amino-acid chain; its full sequence is tRNA (guanine(26)-N(2))-dimethyltransferase (356 aa).

The region spanning 5-352 is the Trm1 methyltransferase domain; the sequence is VLRREGTVEF…VSAGEVERVL (348 aa). Arg40, Arg67, Asp85, Asp111, and Ala112 together coordinate S-adenosyl-L-methionine.

The protein belongs to the class I-like SAM-binding methyltransferase superfamily. Trm1 family.

The catalysed reaction is guanosine(26) in tRNA + 2 S-adenosyl-L-methionine = N(2)-dimethylguanosine(26) in tRNA + 2 S-adenosyl-L-homocysteine + 2 H(+). Its function is as follows. Dimethylates a single guanine residue at position 26 of a number of tRNAs using S-adenosyl-L-methionine as donor of the methyl groups. The chain is tRNA (guanine(26)-N(2))-dimethyltransferase from Pyrobaculum arsenaticum (strain DSM 13514 / JCM 11321 / PZ6).